Reading from the N-terminus, the 325-residue chain is Ferrochelatase (325 aa).

The Fe cation site is built by H195 and E276.

It belongs to the ferrochelatase family.

It localises to the cytoplasm. It carries out the reaction heme b + 2 H(+) = protoporphyrin IX + Fe(2+). It functions in the pathway porphyrin-containing compound metabolism; protoheme biosynthesis; protoheme from protoporphyrin-IX: step 1/1. Functionally, catalyzes the ferrous insertion into protoporphyrin IX. This is Ferrochelatase from Methylococcus capsulatus (strain ATCC 33009 / NCIMB 11132 / Bath).